Here is a 236-residue protein sequence, read N- to C-terminus: Small ribosomal subunit protein uS2c (236 aa).

It belongs to the universal ribosomal protein uS2 family.

It is found in the plastid. The protein resides in the chloroplast. This is Small ribosomal subunit protein uS2c (rps2) from Amborella trichopoda.